An 89-amino-acid polypeptide reads, in one-letter code: MSQERVDKLRKLRIEFEGIIQRMEVAKNLLRELEETTDRVRVDRLQMEVGFLRDYADINCMIEKDRIKEQSSSSSATRTTQEPSLHLPD.

Residues 66-89 (RIKEQSSSSSATRTTQEPSLHLPD) form a disordered region.

This is an uncharacterized protein from Cestrum parqui (CmYLCV).